Consider the following 296-residue polypeptide: Putative mannose 6-phosphate receptor-like protein C530.09c (296 aa).

A signal peptide spans 1–25 (MRLLTCLINVLAGLTLFSQFQRAFG). The Lumenal portion of the chain corresponds to 26 to 206 (LTITRRGFKV…TVKKDSTLNP (181 aa)). The MRH domain occupies 42–197 (PFCALHHPNT…EWKTIHACPT (156 aa)). A disulfide bond links Cys44 and Cys87. Asn64, Asn81, Asn93, Asn96, and Asn143 each carry an N-linked (GlcNAc...) asparagine glycan. Intrachain disulfides connect Cys147-Cys183 and Cys163-Cys195. A helical membrane pass occupies residues 207-227 (VSVFLLFCAIAFLAYFVGGFV). Over 228–249 (YQRVVLNARGLRQIPNYEMWRS) the chain is Cytoplasmic. The helical transmembrane segment at 250–270 (LFGFISDIVIILYSSILSILP) threads the bilayer. The Lumenal segment spans residues 271-296 (SSITRMRGNRRNIDYVEDALIDDIDT).

It belongs to the MRL1/IGF2R family.

The protein localises to the golgi apparatus. It is found in the trans-Golgi network membrane. The protein resides in the endosome membrane. The polypeptide is Putative mannose 6-phosphate receptor-like protein C530.09c (Schizosaccharomyces pombe (strain 972 / ATCC 24843) (Fission yeast)).